Reading from the N-terminus, the 509-residue chain is Putative Rieske 2Fe-2S iron-sulfur protein YhfW (509 aa).

Residues 423-509 (KPDVQFEDIS…IKPLKQIDLD (87 aa)) enclose the Rieske domain. 4 residues coordinate [2Fe-2S] cluster: cysteine 463, histidine 465, cysteine 481, and histidine 484. Cysteine 468 and cysteine 483 are joined by a disulfide.

This sequence belongs to the Rieske iron-sulfur protein family. It depends on [2Fe-2S] cluster as a cofactor.

The sequence is that of Putative Rieske 2Fe-2S iron-sulfur protein YhfW (yhfW) from Bacillus subtilis (strain 168).